A 173-amino-acid chain; its full sequence is Crossover junction endodeoxyribonuclease RuvC (173 aa).

Residues D8, E67, and D139 contribute to the active site. Positions 8, 67, and 139 each coordinate Mg(2+).

It belongs to the RuvC family. As to quaternary structure, homodimer which binds Holliday junction (HJ) DNA. The HJ becomes 2-fold symmetrical on binding to RuvC with unstacked arms; it has a different conformation from HJ DNA in complex with RuvA. In the full resolvosome a probable DNA-RuvA(4)-RuvB(12)-RuvC(2) complex forms which resolves the HJ. The cofactor is Mg(2+).

The protein resides in the cytoplasm. It carries out the reaction Endonucleolytic cleavage at a junction such as a reciprocal single-stranded crossover between two homologous DNA duplexes (Holliday junction).. In terms of biological role, the RuvA-RuvB-RuvC complex processes Holliday junction (HJ) DNA during genetic recombination and DNA repair. Endonuclease that resolves HJ intermediates. Cleaves cruciform DNA by making single-stranded nicks across the HJ at symmetrical positions within the homologous arms, yielding a 5'-phosphate and a 3'-hydroxyl group; requires a central core of homology in the junction. The consensus cleavage sequence is 5'-(A/T)TT(C/G)-3'. Cleavage occurs on the 3'-side of the TT dinucleotide at the point of strand exchange. HJ branch migration catalyzed by RuvA-RuvB allows RuvC to scan DNA until it finds its consensus sequence, where it cleaves and resolves the cruciform DNA. The chain is Crossover junction endodeoxyribonuclease RuvC from Tolumonas auensis (strain DSM 9187 / NBRC 110442 / TA 4).